Here is a 585-residue protein sequence, read N- to C-terminus: Butyrophilin subfamily 3 member A3 (585 aa).

The signal sequence occupies residues 1 to 29 (MKMASSLACLLLNFHVSVFLVQLLTPCSA). Ig-like V-type domains are found at residues 30 to 139 (QFSV…KALV) and 145 to 236 (ALGS…ASIS). Topologically, residues 30 to 248 (QFSVLGPSGP…DPFFTSAQPW (219 aa)) are extracellular. 2 disulfide bridges follow: cysteine 52–cysteine 126 and cysteine 166–cysteine 220. A glycan (N-linked (GlcNAc...) asparagine) is linked at asparagine 115. A helical transmembrane segment spans residues 249–269 (IAALAGTLPISLLLLAGASYF). Residues 270–585 (LWRQQKEKIA…KPQACTEALY (316 aa)) are Cytoplasmic-facing. Residues 322–518 (RGEKSLAYHE…LTICPTPKEV (197 aa)) enclose the B30.2/SPRY domain. Residues 560–585 (AGAEGVSPSTTTSQNHKPQACTEALY) form a disordered region. Over residues 566–576 (SPSTTTSQNHK) the composition is skewed to polar residues.

This sequence belongs to the immunoglobulin superfamily. BTN/MOG family.

Its subcellular location is the membrane. This chain is Butyrophilin subfamily 3 member A3 (BTN3A3), found in Pongo abelii (Sumatran orangutan).